A 181-amino-acid polypeptide reads, in one-letter code: Small ribosomal subunit protein uS4 (181 aa).

The S4 RNA-binding domain occupies 104–166 (RRLQTIVYKK…VTSSFKSRPP (63 aa)).

Belongs to the universal ribosomal protein uS4 family. As to quaternary structure, part of the 30S ribosomal subunit. Contacts protein S5. The interaction surface between S4 and S5 is involved in control of translational fidelity.

Functionally, one of the primary rRNA binding proteins, it binds directly to 16S rRNA where it nucleates assembly of the body of the 30S subunit. Its function is as follows. With S5 and S12 plays an important role in translational accuracy. In Saccharolobus islandicus (strain Y.N.15.51 / Yellowstone #2) (Sulfolobus islandicus), this protein is Small ribosomal subunit protein uS4.